Consider the following 1929-residue polypeptide: Myoferlin (1929 aa).

Residues 1–53 (MISYEPPPSAISNPTDPGGTTIIQGDGENDEEEDRDIVDAGFNPSVPGAPGQT) are disordered. Over residues 27–36 (GENDEEEDRD) the composition is skewed to acidic residues. C2 domains are found at residues 62 to 179 (VKGK…RKWV) and 218 to 354 (EDDD…EEYD). Asp267, Asp275, Asp323, Asp325, and Asp331 together coordinate Ca(2+). Residues 898–907 (RRLVRKRKKD) are compositionally biased toward basic residues. The segment at 898–918 (RRLVRKRKKDPKVSTTSKAAL) is disordered. C2 domains are found at residues 996-1124 (GANT…LLWY), 1159-1283 (RAPQ…TKHE), 1408-1527 (IPYP…SHCG), and 1645-1793 (GPPG…EKCS). Residues Asp1028, Asp1034, Asp1090, and Asp1092 each contribute to the Ca(2+) site. Asp1442, Asp1448, Asp1497, Asp1499, Asp1764, Ser1767, and Asp1770 together coordinate Ca(2+). Basic and acidic residues predominate over residues 1845 to 1858 (DAEERPAGKGRDEP). The disordered stretch occupies residues 1845–1867 (DAEERPAGKGRDEPNMNPKLDPP). Residues 1894–1914 (WVFIGLIILLLVLLFLGVFFY) form a helical membrane-spanning segment.

This sequence belongs to the ferlin family. Ca(2+) is required as a cofactor.

The protein localises to the cell membrane. The protein resides in the nucleus membrane. It is found in the cytoplasmic vesicle membrane. May play a role in membrane regeneration and repair. This is Myoferlin (myof) from Xenopus tropicalis (Western clawed frog).